The chain runs to 437 residues: Neomycin resistance protein (437 aa).

Disordered stretches follow at residues 161-285 (GQRG…EEEA) and 305-338 (VSGA…PVPD). A compositionally biased stretch (low complexity) spans 203 to 229 (PPTGARSPGATAGARATASTSSSSVRS). Basic residues predominate over residues 324–338 (RRRHRGRRHGRPVPD).

It belongs to the Gram-positive plasmids replication protein type 1 family.

This Streptomyces cyanogenus protein is Neomycin resistance protein.